We begin with the raw amino-acid sequence, 209 residues long: Uracil phosphoribosyltransferase (209 aa).

5-phospho-alpha-D-ribose 1-diphosphate contacts are provided by residues Arg79, Arg104, and 131 to 139 (DPMLATGGS). Uracil-binding positions include Ile194 and 199 to 201 (GDA). 5-phospho-alpha-D-ribose 1-diphosphate is bound at residue Asp200.

It belongs to the UPRTase family. The cofactor is Mg(2+).

The enzyme catalyses UMP + diphosphate = 5-phospho-alpha-D-ribose 1-diphosphate + uracil. It functions in the pathway pyrimidine metabolism; UMP biosynthesis via salvage pathway; UMP from uracil: step 1/1. With respect to regulation, allosterically activated by GTP. In terms of biological role, catalyzes the conversion of uracil and 5-phospho-alpha-D-ribose 1-diphosphate (PRPP) to UMP and diphosphate. This chain is Uracil phosphoribosyltransferase, found in Exiguobacterium sibiricum (strain DSM 17290 / CCUG 55495 / CIP 109462 / JCM 13490 / 255-15).